A 424-amino-acid chain; its full sequence is Homoserine O-succinyltransferase (424 aa).

The AB hydrolase-1 domain occupies 67–381 (NAVLVCHALN…PHGHDAFLLD (315 aa)). Ser173 functions as the Nucleophile in the catalytic mechanism. Arg243 is a binding site for substrate. Catalysis depends on residues Asp342 and His375. Position 376 (Asp376) interacts with substrate.

Belongs to the AB hydrolase superfamily. MetX family. As to quaternary structure, homodimer.

Its subcellular location is the cytoplasm. It carries out the reaction L-homoserine + succinyl-CoA = O-succinyl-L-homoserine + CoA. It functions in the pathway amino-acid biosynthesis; L-methionine biosynthesis via de novo pathway; O-succinyl-L-homoserine from L-homoserine: step 1/1. Functionally, transfers a succinyl group from succinyl-CoA to L-homoserine, forming succinyl-L-homoserine. In vitro, also has serine succinyl transferase activity. The polypeptide is Homoserine O-succinyltransferase (Bordetella petrii (strain ATCC BAA-461 / DSM 12804 / CCUG 43448)).